The primary structure comprises 168 residues: Crossover junction endodeoxyribonuclease RuvC (168 aa).

Active-site residues include aspartate 11, glutamate 71, and aspartate 144. Aspartate 11, glutamate 71, and aspartate 144 together coordinate Mg(2+).

Belongs to the RuvC family. In terms of assembly, homodimer which binds Holliday junction (HJ) DNA. The HJ becomes 2-fold symmetrical on binding to RuvC with unstacked arms; it has a different conformation from HJ DNA in complex with RuvA. In the full resolvosome a probable DNA-RuvA(4)-RuvB(12)-RuvC(2) complex forms which resolves the HJ. The cofactor is Mg(2+).

It is found in the cytoplasm. It catalyses the reaction Endonucleolytic cleavage at a junction such as a reciprocal single-stranded crossover between two homologous DNA duplexes (Holliday junction).. Its function is as follows. The RuvA-RuvB-RuvC complex processes Holliday junction (HJ) DNA during genetic recombination and DNA repair. Endonuclease that resolves HJ intermediates. Cleaves cruciform DNA by making single-stranded nicks across the HJ at symmetrical positions within the homologous arms, yielding a 5'-phosphate and a 3'-hydroxyl group; requires a central core of homology in the junction. The consensus cleavage sequence is 5'-(A/T)TT(C/G)-3'. Cleavage occurs on the 3'-side of the TT dinucleotide at the point of strand exchange. HJ branch migration catalyzed by RuvA-RuvB allows RuvC to scan DNA until it finds its consensus sequence, where it cleaves and resolves the cruciform DNA. This is Crossover junction endodeoxyribonuclease RuvC from Protochlamydia amoebophila (strain UWE25).